We begin with the raw amino-acid sequence, 272 residues long: Acidic leucine-rich nuclear phosphoprotein 32-related protein 2 (272 aa).

LRR repeat units lie at residues 57-78 (SLEE…PRLP), 79-100 (ALRR…AAVA), and 106-127 (TLRH…APLA). An LRRCT domain is found at 139-184 (CPVTKAKGYRDKVFALIPSLKFLDGMDAEGNDCLDSDDEEDEEEDE). Residues 163-272 (GMDAEGNDCL…DSEDDANGDN (110 aa)) form a disordered region. Over residues 164–241 (MDAEGNDCLD…DEAGADEEDE (78 aa)) the composition is skewed to acidic residues. Residues 248 to 257 (SKGSSGSAQP) are compositionally biased toward polar residues.

This sequence belongs to the ANP32 family.

The chain is Acidic leucine-rich nuclear phosphoprotein 32-related protein 2 from Oryza sativa subsp. japonica (Rice).